The sequence spans 199 residues: Pre-histone-like nucleoprotein (199 aa).

Ser2 carries the N-acetylserine; by host modification. Residues 2-23 (SILISPSDNTGWGLGTGKMYGG) constitute a propeptide that is removed on maturation. Lys26 carries the N6-acetyllysine; by host modification. The Nuclear localization signal motif lies at 189–199 (RRKASVRRRRT).

The protein belongs to the adenoviridae histone-like nucleoprotein family. Interacts with the core-capsid bridging protein; this interaction bridges the virus core to the capsid. Interacts with host NPM1; this interaction might play a role in placing the pre-histone-like nucleoprotein on the viral DNA or regulating viral gene expression. Interacts with host HMGB1; this interaction inhibits host immune response. Cleaved near the N-terminus by the viral protease during virion maturation to form the mature protein.

It is found in the virion. The protein resides in the host nucleus. Its subcellular location is the host nucleolus. Its function is as follows. Plays a role in the inhibition of host immune response within the nucleus. Interacts with cellular nucleosomes and immobilizes the host immune danger signal HMGB1 on chromatin. In turn, prevents HMGB1 release out of the cell and thus decreases inflammation. Also plays a role in the wrapping and condensation of the viral DNA. May also promote viral genome import into the nucleus. The sequence is that of Pre-histone-like nucleoprotein from Murine adenovirus A serotype 1 (MAdV-1).